Here is a 447-residue protein sequence, read N- to C-terminus: MGKYFGTDGVRGIANSELTPELAFKIGRFGGYVLTKDKERPKVLIGRDTRISGHMLEGALVAGLLSIGAEVMRLGVISTPGVAYLTKALGAQAGVMISASHNPVQDNGIKFFGPDGFKLSDEQELEIEALLDSEQDTLPRPIGKDLGQVNDYFEGGQKYLQYLKQTVDEDFSGIHVALDCAHGATSALATHLFADLDADVSTMGASPNGLNINDGVGSTHPEALAAFVKEKGADVGLAFDGDGDRLIAVDENGQIVDGDQIMYICAKYLNEQGRLKHQTVVSTVMSNLGFYKALEAQGIKSVQTAVGDRYVVEEMKKNGYNLGGEQSGHIIFLDYNTTGDGLLTALQLVNIMKVTKKPLSELAGEMKKYPQKLVNVKVTDKQEAIANEEVQRVIREVEEEMAGNGRILVRPSGTEPLVRVMAEAPTNELCDQYVERIAAVIRERFGA.

Ser100 (phosphoserine intermediate) is an active-site residue. Mg(2+) is bound by residues Ser100, Asp240, Asp242, and Asp244. Phosphoserine is present on Ser100.

This sequence belongs to the phosphohexose mutase family. Mg(2+) is required as a cofactor. Post-translationally, activated by phosphorylation.

It carries out the reaction alpha-D-glucosamine 1-phosphate = D-glucosamine 6-phosphate. In terms of biological role, catalyzes the conversion of glucosamine-6-phosphate to glucosamine-1-phosphate. In Anoxybacillus flavithermus (strain DSM 21510 / WK1), this protein is Phosphoglucosamine mutase.